Reading from the N-terminus, the 402-residue chain is Putative F-box protein At4g22180 (402 aa).

Residues 18 to 64 (PNSWSELPLDLLTAVFERLSYANFQRAKSVCSSWHSGSRQSVPIQIP) enclose the F-box domain.

In Arabidopsis thaliana (Mouse-ear cress), this protein is Putative F-box protein At4g22180.